The primary structure comprises 349 residues: Anthranilate phosphoribosyltransferase (349 aa).

5-phospho-alpha-D-ribose 1-diphosphate contacts are provided by residues Gly-82, 85-86, 92-95, 110-118, and Ser-122; these read GD, NVSS, and KHGNRAVSG. Gly-82 is an anthranilate binding site. Ser-94 is a binding site for Mg(2+). Position 113 (Asn-113) interacts with anthranilate. Arg-168 is an anthranilate binding site. Residues Asp-227 and Glu-228 each coordinate Mg(2+).

It belongs to the anthranilate phosphoribosyltransferase family. Homodimer. It depends on Mg(2+) as a cofactor.

It carries out the reaction N-(5-phospho-beta-D-ribosyl)anthranilate + diphosphate = 5-phospho-alpha-D-ribose 1-diphosphate + anthranilate. It functions in the pathway amino-acid biosynthesis; L-tryptophan biosynthesis; L-tryptophan from chorismate: step 2/5. In terms of biological role, catalyzes the transfer of the phosphoribosyl group of 5-phosphorylribose-1-pyrophosphate (PRPP) to anthranilate to yield N-(5'-phosphoribosyl)-anthranilate (PRA). This Pseudomonas paraeruginosa (strain DSM 24068 / PA7) (Pseudomonas aeruginosa (strain PA7)) protein is Anthranilate phosphoribosyltransferase.